Here is a 70-residue protein sequence, read N- to C-terminus: Protein SlyX homolog (70 aa).

It belongs to the SlyX family.

This is Protein SlyX homolog from Shewanella piezotolerans (strain WP3 / JCM 13877).